A 545-amino-acid polypeptide reads, in one-letter code: CTP synthase (545 aa).

The segment at 1–266 (MTTNYIFVTG…DDYICKRFGL (266 aa)) is amidoligase domain. Ser14 is a CTP binding site. Ser14 contacts UTP. Residues 15 to 20 (SLGKGI) and Asp72 contribute to the ATP site. Asp72 and Glu140 together coordinate Mg(2+). CTP is bound by residues 147-149 (DIE), 187-192 (KTKPTQ), and Lys223. UTP-binding positions include 187–192 (KTKPTQ) and Lys223. An ATP-binding site is contributed by 239–241 (KDV). The Glutamine amidotransferase type-1 domain occupies 291–542 (TIGMVGKYIA…VKAAGEYQKR (252 aa)). Gly352 provides a ligand contact to L-glutamine. Cys379 (nucleophile; for glutamine hydrolysis) is an active-site residue. L-glutamine-binding positions include 380–383 (LGMQ), Glu403, and Arg470. Residues His515 and Glu517 contribute to the active site.

This sequence belongs to the CTP synthase family. In terms of assembly, homotetramer.

The enzyme catalyses UTP + L-glutamine + ATP + H2O = CTP + L-glutamate + ADP + phosphate + 2 H(+). It carries out the reaction L-glutamine + H2O = L-glutamate + NH4(+). The catalysed reaction is UTP + NH4(+) + ATP = CTP + ADP + phosphate + 2 H(+). The protein operates within pyrimidine metabolism; CTP biosynthesis via de novo pathway; CTP from UDP: step 2/2. Allosterically activated by GTP, when glutamine is the substrate; GTP has no effect on the reaction when ammonia is the substrate. The allosteric effector GTP functions by stabilizing the protein conformation that binds the tetrahedral intermediate(s) formed during glutamine hydrolysis. Inhibited by the product CTP, via allosteric rather than competitive inhibition. Functionally, catalyzes the ATP-dependent amination of UTP to CTP with either L-glutamine or ammonia as the source of nitrogen. Regulates intracellular CTP levels through interactions with the four ribonucleotide triphosphates. The chain is CTP synthase from Sodalis glossinidius (strain morsitans).